Consider the following 628-residue polypeptide: Chaperone protein HtpG (628 aa).

Positions 1–334 (MTTIDTASET…SEDLPLNLSR (334 aa)) are a; substrate-binding. The tract at residues 335–550 (EMLQNNPQLA…GFGPDRELEK (216 aa)) is b. The tract at residues 551 to 628 (MLARANKGAA…LVLRGVVAHG (78 aa)) is c.

Belongs to the heat shock protein 90 family. Homodimer.

The protein localises to the cytoplasm. Functionally, molecular chaperone. Has ATPase activity. The protein is Chaperone protein HtpG of Rhodopseudomonas palustris (strain HaA2).